The sequence spans 572 residues: Adenine deaminase (572 aa).

This sequence belongs to the metallo-dependent hydrolases superfamily. Adenine deaminase family. Mn(2+) is required as a cofactor.

It carries out the reaction adenine + H2O + H(+) = hypoxanthine + NH4(+). This chain is Adenine deaminase, found in Clostridium perfringens (strain 13 / Type A).